The following is a 30-amino-acid chain: Proteinase inhibitor CeKI (30 aa).

It belongs to the protease inhibitor I3 (leguminous Kunitz-type inhibitor) family.

Its function is as follows. Potent inhibitor of serine proteases plasma kallikrein, plasmin and coagulation factor XIIa. Weak inhibitor of serine proteases trypsin and coagulation factor Xa. Does not inhibit the serine proteases chymotrypsin, elastase or thrombin. Inhibits kinin release from HMW-kininogen by kallikrein in vitro. The sequence is that of Proteinase inhibitor CeKI from Paubrasilia echinata (Pau Brasil).